A 116-amino-acid chain; its full sequence is T cell receptor alpha variable 38-2/delta variable 8 (116 aa).

The first 21 residues, 1-21 (MACPGFLWALVISTCLEFSMA), serve as a signal peptide directing secretion. The 95-residue stretch at 22–116 (QTVTQSQPEM…AAMYFCAYRS (95 aa)) folds into the Ig-like domain. Cysteine 43 and cysteine 112 are disulfide-bonded. An N-linked (GlcNAc...) asparagine glycan is attached at asparagine 78.

Alpha-beta TR is a heterodimer composed of an alpha and beta chain; disulfide-linked. The alpha-beta TR is associated with the transmembrane signaling CD3 coreceptor proteins to form the TR-CD3 (TcR or TCR). The assembly of alpha-beta TR heterodimers with CD3 occurs in the endoplasmic reticulum where a single alpha-beta TR heterodimer associates with one CD3D-CD3E heterodimer, one CD3G-CD3E heterodimer and one CD247 homodimer forming a stable octameric structure. CD3D-CD3E and CD3G-CD3E heterodimers preferentially associate with TR alpha and TR beta chains, respectively. The association of the CD247 homodimer is the last step of TcR assembly in the endoplasmic reticulum and is required for transport to the cell surface.

It localises to the cell membrane. In terms of biological role, v region of the variable domain of T cell receptor (TR) alpha chain that participates in the antigen recognition. Alpha-beta T cell receptors are antigen specific receptors which are essential to the immune response and are present on the cell surface of T lymphocytes. Recognize peptide-major histocompatibility (MH) (pMH) complexes that are displayed by antigen presenting cells (APC), a prerequisite for efficient T cell adaptive immunity against pathogens. Binding of alpha-beta TR to pMH complex initiates TR-CD3 clustering on the cell surface and intracellular activation of LCK that phosphorylates the ITAM motifs of CD3G, CD3D, CD3E and CD247 enabling the recruitment of ZAP70. In turn ZAP70 phosphorylates LAT, which recruits numerous signaling molecules to form the LAT signalosome. The LAT signalosome propagates signal branching to three major signaling pathways, the calcium, the mitogen-activated protein kinase (MAPK) kinase and the nuclear factor NF-kappa-B (NF-kB) pathways, leading to the mobilization of transcription factors that are critical for gene expression and essential for T cell growth and differentiation. The T cell repertoire is generated in the thymus, by V-(D)-J rearrangement. This repertoire is then shaped by intrathymic selection events to generate a peripheral T cell pool of self-MH restricted, non-autoaggressive T cells. Post-thymic interaction of alpha-beta TR with the pMH complexes shapes TR structural and functional avidity. This Homo sapiens (Human) protein is T cell receptor alpha variable 38-2/delta variable 8.